The following is a 255-amino-acid chain: Small ribosomal subunit protein eS1 (255 aa).

Position 2 is an N-acetylalanine; partial (Ala2).

The protein belongs to the eukaryotic ribosomal protein eS1 family. As to quaternary structure, component of the small ribosomal subunit. Mature ribosomes consist of a small (40S) and a large (60S) subunit. The 40S subunit contains about 33 different proteins and 1 molecule of RNA (18S). The 60S subunit contains about 49 different proteins and 3 molecules of RNA (25S, 5.8S and 5S).

The protein localises to the cytoplasm. The chain is Small ribosomal subunit protein eS1 from Candida glabrata (strain ATCC 2001 / BCRC 20586 / JCM 3761 / NBRC 0622 / NRRL Y-65 / CBS 138) (Yeast).